Reading from the N-terminus, the 330-residue chain is Biotin synthase (330 aa).

The Radical SAM core domain maps to 53–276; that stretch reads NNIRLNVLLS…VFPFKELRLS (224 aa). Positions 68, 72, and 75 each coordinate [4Fe-4S] cluster. 4 residues coordinate [2Fe-2S] cluster: C112, C144, C204, and R274.

It belongs to the radical SAM superfamily. Biotin synthase family. Homodimer. It depends on [4Fe-4S] cluster as a cofactor. The cofactor is [2Fe-2S] cluster.

It carries out the reaction (4R,5S)-dethiobiotin + (sulfur carrier)-SH + 2 reduced [2Fe-2S]-[ferredoxin] + 2 S-adenosyl-L-methionine = (sulfur carrier)-H + biotin + 2 5'-deoxyadenosine + 2 L-methionine + 2 oxidized [2Fe-2S]-[ferredoxin]. The protein operates within cofactor biosynthesis; biotin biosynthesis; biotin from 7,8-diaminononanoate: step 2/2. Its function is as follows. Catalyzes the conversion of dethiobiotin (DTB) to biotin by the insertion of a sulfur atom into dethiobiotin via a radical-based mechanism. In Streptococcus agalactiae serotype III (strain NEM316), this protein is Biotin synthase.